The sequence spans 371 residues: Neuropeptide Y receptor type 6 (371 aa).

Residues 1-31 (MEVSLNDPASNKTSAKSNSSAFFYFESCQSP) are Extracellular-facing. 2 N-linked (GlcNAc...) asparagine glycosylation sites follow: asparagine 11 and asparagine 18. A helical transmembrane segment spans residues 32–52 (SLALLLLLIAYTVVLIMGICG). Residues 53–72 (NLSLITIIFKKQREAQNVTN) are Cytoplasmic-facing. Residues 73–93 (ILIANLSLSDILVCVMCIPFT) form a helical membrane-spanning segment. Topologically, residues 94-111 (AIYTLMDRWIFGNTMCKL) are extracellular. Cysteine 109 and cysteine 196 form a disulfide bridge. The chain crosses the membrane as a helical span at residues 112–132 (TSYVQSVSISVSIFSLVLIAI). At 133–150 (ERYQLIVNPRGWKPSASH) the chain is on the cytoplasmic side. The helical transmembrane segment at 151 to 171 (AYWGIMLIWLFSLLLSIPLLL) threads the bilayer. At 172-213 (SYHLTDEPFRNLSLPTDLYSHHVVCVEHWPSKTNQLLYSTSL) the chain is on the extracellular side. The N-linked (GlcNAc...) asparagine glycan is linked to asparagine 182. Residues 214–234 (IMLQYFVPLGFMFICYLKIVI) traverse the membrane as a helical segment. Over 235–263 (CLHKRNSKIDRRRENESRLTENKRINTML) the chain is Cytoplasmic. Residues 264–284 (ISIVVTFAACWLPLNTFNVIF) traverse the membrane as a helical segment. Topologically, residues 285-297 (DWYHEVLMSCHHD) are extracellular. Residues 298-318 (LVFAICHLVAMVSTCINPLFY) form a helical membrane-spanning segment. At 319 to 371 (GFLNRNFQKDLVVLIHHCLCFALRERYENIAISTLHTDESKGSLRVAHIPAGI) the chain is on the cytoplasmic side. A lipid anchor (S-palmitoyl cysteine) is attached at cysteine 336.

This sequence belongs to the G-protein coupled receptor 1 family. Expressed in hippocampus, striatum, hypothalamus, cerebellum, small intestine, colon and adrenal gland.

It localises to the cell membrane. In terms of biological role, receptor for neuropeptide Y and peptide YY. The activity of this receptor is mediated by G proteins that inhibit adenylate cyclase activity. This is Neuropeptide Y receptor type 6 (NPY6R) from Oryctolagus cuniculus (Rabbit).